The sequence spans 252 residues: 5'-nucleotidase SurE (252 aa).

4 residues coordinate a divalent metal cation: aspartate 8, aspartate 9, serine 39, and asparagine 91.

The protein belongs to the SurE nucleotidase family. A divalent metal cation is required as a cofactor.

It localises to the cytoplasm. It carries out the reaction a ribonucleoside 5'-phosphate + H2O = a ribonucleoside + phosphate. Nucleotidase that shows phosphatase activity on nucleoside 5'-monophosphates. The chain is 5'-nucleotidase SurE from Bordetella bronchiseptica (strain ATCC BAA-588 / NCTC 13252 / RB50) (Alcaligenes bronchisepticus).